Reading from the N-terminus, the 398-residue chain is Phosphopentomutase (398 aa).

Mn(2+) contacts are provided by Asp13, Asp290, His295, Asp331, His332, and His343.

Belongs to the phosphopentomutase family. It depends on Mn(2+) as a cofactor.

It is found in the cytoplasm. It catalyses the reaction 2-deoxy-alpha-D-ribose 1-phosphate = 2-deoxy-D-ribose 5-phosphate. It carries out the reaction alpha-D-ribose 1-phosphate = D-ribose 5-phosphate. It functions in the pathway carbohydrate degradation; 2-deoxy-D-ribose 1-phosphate degradation; D-glyceraldehyde 3-phosphate and acetaldehyde from 2-deoxy-alpha-D-ribose 1-phosphate: step 1/2. Functionally, isomerase that catalyzes the conversion of deoxy-ribose 1-phosphate (dRib-1-P) and ribose 1-phosphate (Rib-1-P) to deoxy-ribose 5-phosphate (dRib-5-P) and ribose 5-phosphate (Rib-5-P), respectively. This chain is Phosphopentomutase, found in Clostridium tetani (strain Massachusetts / E88).